The sequence spans 193 residues: Phosphoheptose isomerase (193 aa).

The region spanning 37–193 (LADSFKAGGK…QLIEKEMVKA (157 aa)) is the SIS domain. 52–54 (NGG) lines the substrate pocket. Residues H61 and E65 each coordinate Zn(2+). Substrate contacts are provided by residues E65, 93–94 (ND), 119–121 (STS), S124, and Q172. Residues Q172 and H180 each coordinate Zn(2+).

It belongs to the SIS family. GmhA subfamily. Homotetramer. The cofactor is Zn(2+).

It localises to the cytoplasm. The catalysed reaction is 2 D-sedoheptulose 7-phosphate = D-glycero-alpha-D-manno-heptose 7-phosphate + D-glycero-beta-D-manno-heptose 7-phosphate. It participates in carbohydrate biosynthesis; D-glycero-D-manno-heptose 7-phosphate biosynthesis; D-glycero-alpha-D-manno-heptose 7-phosphate and D-glycero-beta-D-manno-heptose 7-phosphate from sedoheptulose 7-phosphate: step 1/1. Its pathway is bacterial outer membrane biogenesis; LPS core biosynthesis. Functionally, catalyzes the isomerization of sedoheptulose 7-phosphate in D-glycero-D-manno-heptose 7-phosphate. This is Phosphoheptose isomerase from Yersinia pestis.